Consider the following 942-residue polypeptide: MFGQLLGDPNKRRLKNYYPIVSEINILEEDISVLSDEELRGSTNEFRQRLEKAENSDKQLKILDELLPNAFAVVREASKRVLGMRHFDVQLIGGMVLHEGQIAEMKTGEGKTLVSTLPSYLNALTGKGVHVVTVNDYLAKRDAEWMGQVHRFLGLEVGLIQQDMNPRERKKNYQCDITYATNSELGFDYLRDNMAADKAEIVQRDFQFCVIDEVDSILIDEARTPLIISGQVERPQEKYQKAAEVVMKLQRASELGKDGIDPEGDYEVDEKQRSCVLTDDGFAKTEELLEVKDLFDPKDPWAHYVTNALKAKELFTKDVNYIVRNGEAVIVDEFTGRVMPGRRWSDGQHQAIEAKENLAIQPETQTLASITYQNFFLLYPRLSGMTGTAKTEEVEFDKTYKLKTSVIPTNKKVSREDWVDQVFKTENAKWRAVAKETSLINKQGRPILVGTTSVEKSELLSTLLAEENIPHNLLNAKPENVERESEIVAQAGRKGAVTIATNMAGRGTDIILGGNSEYMAKLKIKQVLSSRLVKPEDRHNPPVPLQRDKASGFKSLEVKAEAKTSNQSSSLNNLFPVILSDKTDNELGQLAAKLVKEWGDRALTLGELEDYIATAAEKTPTKDENILAIRRAIHSIKTEYEVITNNEEKLVTEAGGLHVIGTERHESRRVDNQLRGRAGRQGDFGSTRFFLSLEDNLLRIFGGDRVAGLMNAFRVEEDMPIESGMLTRSLEGAQKKVETYYYDIRKQVFEYDEVMNNQRKAVYSERRRVLKGQELKSQVISYGEKTMGEIVDAYINEELPPEEWELDKLVGKVQEFIYLLNDLKSSELIGLDTNQLKVFLQEQMRNAYDLKEAQLEETHPGIMREAEKFFMLQQLDTLWREHLQSMDSLRESVGLRGYGQKDPLIEYKNEGYDMFLEMMINFRRNVIYSMFMFQPTTKKVES.

ATP is bound by residues Gln-90, Gly-108–Thr-112, and Asp-509.

It belongs to the SecA family. In terms of assembly, monomer and homodimer. Part of the essential Sec protein translocation apparatus which comprises SecA, SecYEG and auxiliary proteins SecDF. Other proteins may also be involved.

Its subcellular location is the cell inner membrane. The protein localises to the cellular thylakoid membrane. It localises to the cytoplasm. It carries out the reaction ATP + H2O + cellular proteinSide 1 = ADP + phosphate + cellular proteinSide 2.. Functionally, part of the Sec protein translocase complex. Interacts with the SecYEG preprotein conducting channel. Has a central role in coupling the hydrolysis of ATP to the transfer of proteins into and across the cell membrane, serving as an ATP-driven molecular motor driving the stepwise translocation of polypeptide chains across the membrane. In terms of biological role, probably participates in protein translocation into and across both the cytoplasmic and thylakoid membranes in cyanobacterial cells. This Prochlorococcus marinus (strain NATL2A) protein is Protein translocase subunit SecA.